The sequence spans 772 residues: U3 small nucleolar RNA-associated protein 25 homolog (772 aa).

A disordered region spans residues 1–179; it reads MGKRRNRGRS…SEEFTDVKHE (179 aa). 2 promotes p53/TP53 degradation regions span residues 1–201 and 589–651; these read MGKR…SQRP and VQLP…KKEE. S10 is subject to Phosphoserine. Positions 25-43 are enriched in basic and acidic residues; the sequence is RDFGEEHPFYDRVSKKEAK. Phosphoserine occurs at positions 52, 60, and 64. Over residues 54–70 the composition is skewed to basic and acidic residues; sequence DSSHSESESESEQEHVS. Over residues 84 to 124 the composition is skewed to acidic residues; it reads EEEEEEEEEEEEEEEEEEEEEEEEEDDSAVGDAEMNEEAGS. The span at 127–136 shows a compositional bias: low complexity; that stretch reads GSVGEAAVSE. A compositionally biased stretch (basic and acidic residues) spans 169-179; that stretch reads SSEEFTDVKHE. The tract at residues 652–713 is represses p53/TP53 degradation; sequence LNFTHICEYT…YELPTYPHFY (62 aa).

It belongs to the UTP25 family. In terms of assembly, interacts with CAPN3; the interaction is required for CAPN3 translocation to the nucleolus. In terms of processing, phosphorylated. Phosphorylation is required to promote p53/TP53 degradation in the nucleolus which promotes cell cycle progression and liver development. As to expression, expressed in all tissues tested: brain, small intestine, large intestine, stomach, liver, spleen, thymus, lung, kidney and testes (at protein level).

The protein localises to the nucleus. It is found in the nucleolus. Functionally, component of the ribosomal small subunit processome for the biogenesis of ribosomes, functions in pre-ribosomal RNA (pre-rRNA) processing. Essential for embryonic development in part through the regulation of p53 pathway. Controls the expansion growth of digestive organs and liver. Also involved in the sympathetic neuronal development. Mediates, with CAPN3, the proteasome-independent degradation of p53/TP53. In Mus musculus (Mouse), this protein is U3 small nucleolar RNA-associated protein 25 homolog.